The following is a 570-amino-acid chain: Auxin efflux carrier component 6 (570 aa).

At Met1–Glu6 the chain is on the extracellular side. A helical membrane pass occupies residues Phe7–Ser27. The Cytoplasmic portion of the chain corresponds to Val28–Gln38. Residues Cys39 to Ile59 traverse the membrane as a helical segment. Val51 contacts (indol-3-yl)acetate. Residues Ser60–Met70 are Extracellular-facing. A helical transmembrane segment spans residues Phe71–Val91. The Cytoplasmic portion of the chain corresponds to Phe92–Trp100. The chain crosses the membrane as a helical span at residues Leu101 to Leu121. (indol-3-yl)acetate-binding residues include Asn112 and Leu114. Topologically, residues Gln122–Thr131 are extracellular. Residues Leu132–Phe152 traverse the membrane as a helical segment. Tyr145 contributes to the (indol-3-yl)acetate binding site. At Glu153–Ser430 the chain is on the cytoplasmic side. Phosphoserine occurs at positions 230 and 308. Residues Leu431 to Val451 form a helical membrane-spanning segment. The Extracellular segment spans residues Asp452–Ser454. The chain crosses the membrane as a helical span at residues Ile455–Ala475. Topologically, residues Leu476–Gly491 are cytoplasmic. Residues Met492 to Leu512 traverse the membrane as a helical segment. Topologically, residues Arg513–Ser515 are extracellular. The helical transmembrane segment at Arg516–Ala536 threads the bilayer. Ile530 and Val531 together coordinate (indol-3-yl)acetate. Residues Arg537–Leu549 are Cytoplasmic-facing. Residues Val550 to Leu570 traverse the membrane as a helical segment.

This sequence belongs to the auxin efflux carrier (TC 2.A.69.1) family. In terms of assembly, homodimer. As to expression, expressed in the vasculature of the primary root, cotyledons, floral stem, sepals and the main transmitting tract of the reproductive silique. Expressed in embryos, shoot meristem, root tip and lateral root meristems. Expressed in the nectaries and the floral organ boundaries of the anthers. Detected in pollen. Expressed in broad subepidermal domains that narrowed to sites of vein formation. Expressed in veins of mature leaves.

The protein localises to the endoplasmic reticulum membrane. Its function is as follows. Component of the intracellular auxin-transport pathway. Regulates auxin transport and auxin homeostasis. Directly involved in the regulation of nectar production. Involved in unfolded protein response (UPR) activation. Involved in the control of vein patterning. Redundantly with PIN8, inhibits the vein-formation-promoting functions of PIN5. PIN5, PIN6, and PIN8 control vein network geometry, but they are expressed in mutually exclusive domains of leaf vascular cells. The protein is Auxin efflux carrier component 6 of Arabidopsis thaliana (Mouse-ear cress).